The primary structure comprises 127 residues: SH2 domain-containing protein 1A (127 aa).

The 97-residue stretch at 6–102 (VYHGKISRET…GIVIPLQYPV (97 aa)) folds into the SH2 domain. The interval 67-92 (ETAPGVHKRYFRKIKNLISAFQKPDQ) is interaction with FYN SH3 domain. An N6-acetyllysine modification is found at Lys89. The disordered stretch occupies residues 104–127 (KSSPRSTQGTTGIREDPDVCLKAP). Over residues 116 to 127 (IREDPDVCLKAP) the composition is skewed to basic and acidic residues.

In terms of assembly, interacts with CD84, CD244, LY9, SLAMF1 and FYN. Interacts with NTRK1, NTRK2 and NTRK3.

The protein localises to the cytoplasm. In terms of biological role, cytoplasmic adapter regulating receptors of the signaling lymphocytic activation molecule (SLAM) family such as SLAMF1, CD244, LY9, CD84, SLAMF6 and SLAMF7. In SLAM signaling seems to cooperate with SH2D1B/EAT-2. Initially it has been proposed that association with SLAMF1 prevents SLAMF1 binding to inhibitory effectors including INPP5D/SHIP1 and PTPN11/SHP-2. However, by simultaneous interactions, recruits FYN which subsequently phosphorylates and activates SLAMF1. Positively regulates CD244/2B4- and CD84-mediated natural killer (NK) cell functions. Can also promote CD48-, SLAMF6 -, LY9-, and SLAMF7-mediated NK cell activation. In the context of NK cell-mediated cytotoxicity enhances conjugate formation with target cells. May also regulate the activity of the neurotrophin receptors NTRK1, NTRK2 and NTRK3. The polypeptide is SH2 domain-containing protein 1A (SH2D1A) (Saguinus oedipus (Cotton-top tamarin)).